The sequence spans 92 residues: Small ribosomal subunit protein uS19 (92 aa).

This sequence belongs to the universal ribosomal protein uS19 family.

Its function is as follows. Protein S19 forms a complex with S13 that binds strongly to the 16S ribosomal RNA. The protein is Small ribosomal subunit protein uS19 of Dinoroseobacter shibae (strain DSM 16493 / NCIMB 14021 / DFL 12).